The sequence spans 150 residues: 3-dehydroquinate dehydratase (150 aa).

The active-site Proton acceptor is the tyrosine 26. Substrate contacts are provided by asparagine 77, histidine 83, and aspartate 90. The active-site Proton donor is histidine 103. Substrate-binding positions include 104-105 (LS) and arginine 114.

Belongs to the type-II 3-dehydroquinase family. As to quaternary structure, homododecamer.

It catalyses the reaction 3-dehydroquinate = 3-dehydroshikimate + H2O. It participates in metabolic intermediate biosynthesis; chorismate biosynthesis; chorismate from D-erythrose 4-phosphate and phosphoenolpyruvate: step 3/7. Its function is as follows. Catalyzes a trans-dehydration via an enolate intermediate. This chain is 3-dehydroquinate dehydratase, found in Photorhabdus laumondii subsp. laumondii (strain DSM 15139 / CIP 105565 / TT01) (Photorhabdus luminescens subsp. laumondii).